The sequence spans 362 residues: MPGKQSEDKPMEVSTVEDGGDEGLGGLTVEELQQGQEAALALEDMMALSAQTLVQTEVEELYEEVRPLGQGRFGRVLLVTHRQKGTPLALKQLPKQSTSLRGFLYEFCVGLSLGTHSAIVTAYGIGIESANSYSFLTEPVLHGDLITFIQPKVGLPQPAAQRCAAQLASALEHIHSHGLVYRDLKPENVLVCDPACQRVKLTDFGHTRPRGTLLRLTGPPIPYTAPELCAPPPLPEGLPIQPSLDAWALGVLIFCLLTGYFPWDQPLVEVDPFFEDFLIWQASGQPQDRPQPWYSLSPAADTLLWGLLDPHPRKRNPVGSIKSYLGQPWKQREGEAEELATELREDGWRGGQEAAKGEQPAC.

Positions 1 to 11 are enriched in basic and acidic residues; the sequence is MPGKQSEDKPM. The segment at 1–26 is disordered; it reads MPGKQSEDKPMEVSTVEDGGDEGLGG. Residues 62–330 enclose the Protein kinase domain; it reads YEEVRPLGQG…IKSYLGQPWK (269 aa). Residues 68-76 and K91 contribute to the ATP site; that span reads LGQGRFGRV. D183 (proton acceptor) is an active-site residue. The interval 329-362 is disordered; that stretch reads WKQREGEAEELATELREDGWRGGQEAAKGEQPAC.

This sequence belongs to the protein kinase superfamily. Ser/Thr protein kinase family. STKL subfamily.

It carries out the reaction L-seryl-[protein] + ATP = O-phospho-L-seryl-[protein] + ADP + H(+). The enzyme catalyses L-threonyl-[protein] + ATP = O-phospho-L-threonyl-[protein] + ADP + H(+). This chain is Serine/threonine-protein kinase SBK2 (Sbk2), found in Mus musculus (Mouse).